Here is a 179-residue protein sequence, read N- to C-terminus: tRNA (cytidine(56)-2'-O)-methyltransferase (179 aa).

Residues L82, 112–116 (GAEKV), and 130–137 (VGNQPHSE) each bind S-adenosyl-L-methionine.

The protein belongs to the aTrm56 family. As to quaternary structure, homodimer.

The protein resides in the cytoplasm. It catalyses the reaction cytidine(56) in tRNA + S-adenosyl-L-methionine = 2'-O-methylcytidine(56) in tRNA + S-adenosyl-L-homocysteine + H(+). Specifically catalyzes the AdoMet-dependent 2'-O-ribose methylation of cytidine at position 56 in tRNAs. In Methanococcus maripaludis (strain C7 / ATCC BAA-1331), this protein is tRNA (cytidine(56)-2'-O)-methyltransferase.